The following is an 81-amino-acid chain: Insect-toxin Cn10 (81 aa).

Residues 1-13 (ITACLVLIGTVCA) form the signal peptide. An LCN-type CS-alpha/beta domain is found at 14–79 (KEGYLVNKST…TYPIPGKTCR (66 aa)). Intrachain disulfides connect C25–C78, C29–C54, C38–C59, and C42–C61. Residue K81 is a propeptide, removed by a carboxypeptidase.

Belongs to the long (4 C-C) scorpion toxin superfamily. Sodium channel inhibitor family. Beta subfamily. Expressed by the venom gland.

It localises to the secreted. Its function is as follows. Beta toxins bind voltage-independently at site-4 of sodium channels (Nav) and shift the voltage of activation toward more negative potentials thereby affecting sodium channel activation and promoting spontaneous and repetitive firing. Is toxic on insects and crustaceans, but not on mammals. This Centruroides noxius (Mexican scorpion) protein is Insect-toxin Cn10.